The chain runs to 380 residues: Guanine nucleotide-binding protein alpha-1 subunit (380 aa).

Residues 1–25 are disordered; that stretch reads MGSSCSRSHSLSEAETTKNAKSADI. A lipid anchor (N-myristoyl glycine) is attached at Gly2. The S-palmitoyl cysteine moiety is linked to residue Cys5. A compositionally biased stretch (basic and acidic residues) spans 10–25; it reads SLSEAETTKNAKSADI. Residues 38-380 enclose the G-alpha domain; the sequence is HIHKLLLLGA…ESMRRSREGT (343 aa). The segment at 41-54 is G1 motif; the sequence is KLLLLGAGESGKST. Residues Glu49, Ser50, Gly51, Lys52, Ser53, Thr54, Asp163, Leu188, Tyr189, Thr194, Gly222, Asn288, Lys289, Asp291, and Ala356 each contribute to the GTP site. Ser53 contributes to the Mg(2+) binding site. The tract at residues 186–194 is G2 motif; sequence DVLYARVRT. Thr194 contacts Mg(2+). Positions 215–224 are G3 motif; the sequence is YRLYDVGGQR. The G4 motif stretch occupies residues 284–291; that stretch reads ILFLNKFD. Residues 354–359 form a G5 motif region; sequence TTALDQ.

It belongs to the G-alpha family. In terms of assembly, g proteins are composed of 3 units; alpha, beta and gamma. The alpha chain contains the guanine nucleotide binding site. Interacts with COLD1. It depends on Mg(2+) as a cofactor.

It localises to the cell membrane. In terms of biological role, guanine nucleotide-binding proteins (G proteins) are involved as modulators or transducers in various transmembrane signaling systems. May function in a signal transduction pathway required for normal growth and development of internodes, leaves, panicles and seeds. Involved in gibberellin signal transduction. Involved in R gene-mediated disease resistance. Functions upstream of the small GTPase RAC1 in the early steps of signaling. Involved in brassinosteroid response. May not be a signaling molecule in BRI1-mediated perception or transduction. This is Guanine nucleotide-binding protein alpha-1 subunit (GPA1) from Oryza sativa subsp. indica (Rice).